Consider the following 302-residue polypeptide: Protein FLOURY 1 (302 aa).

The next 2 membrane-spanning stretches (helical) occupy residues serine 27–leucine 47 and leucine 82–valine 102. Residues serine 160 to valine 195 form a disordered region. Acidic residues predominate over residues phenylalanine 172–aspartate 192. One can recognise a GTD-binding domain in the interval glycine 193–arginine 299. Residues arginine 199–methionine 254 are a coiled coil. The interval proline 283–lysine 302 is disordered.

Interacts (via C-terminus) with both 22 kDa and 19 kDa alpha-zeins. Interacts (via C-terminus) with OP10 (via N-terminus). In terms of tissue distribution, expressed in endosperm. Not detected in embryo, leaves and roots.

Its subcellular location is the endoplasmic reticulum membrane. Its function is as follows. Involved in protein body development and 22 kDa alpha-zein localization. This Zea mays (Maize) protein is Protein FLOURY 1.